The primary structure comprises 244 residues: Ras-related protein Rab-12 (244 aa).

At Met1 the chain carries N-acetylmethionine. Over residues 1-10 (MDPGAALQRR) the composition is skewed to low complexity. The segment at 1–37 (MDPGAALQRRAGGGGGLGAGSPALSGGQGRRRKQPPR) is disordered. Phosphoserine is present on residues Ser21 and Ser25. Gly52 contacts GDP. Residues Gly52, Val53, Gly54, Lys55, and Thr56 each coordinate GTP. 4 residues coordinate GDP: Gly54, Lys55, Thr56, and Ser57. Residue Thr56 participates in Mg(2+) binding. Short sequence motifs (switch) lie at residues 65-79 (DTFC…GVDF) and 97-114 (DTAG…YYRS). 2 residues coordinate GTP: Ser73 and Thr74. 2 residues coordinate Mg(2+): Thr74 and Asp97. A GTP-binding site is contributed by Gly100. Ser106 carries the phosphoserine; by LRRK2 modification. The GDP site is built by Asn155, Lys156, Asp158, and Cys159. Residues Asn155, Lys156, and Asp158 each contribute to the GTP site. The GTP site is built by Ser186, Ala187, and Lys188. Residues Ala187 and Lys188 each coordinate GDP. Positions 225–244 (QPEPEIPPELPPPRPHVRCC) are disordered. Over residues 228–238 (PEIPPELPPPR) the composition is skewed to pro residues. Residues Cys243 and Cys244 are each lipidated (S-geranylgeranyl cysteine).

It belongs to the small GTPase superfamily. Rab family. In terms of assembly, interacts with RABIF. Interacts with OPTN. Interacts with LRRK2; interaction facilitates phosphorylation of Ser-106. Interacts with GDI1, GDI2, CHM and CHML; these interactions are disrupted by phosphorylation on Ser-106. Interacts with RILPL1 and RILPL2; these interactions are dependent on phosphorylation of Ser-106. The cofactor is Mg(2+). Post-translationally, phosphorylation of Ser-106 in the switch II region by LRRK2 prevents the association of RAB regulatory proteins, including CHM, CHML and RAB GDP dissociation inhibitors GDI1 and GDI2.

The protein localises to the recycling endosome membrane. It is found in the lysosome membrane. Its subcellular location is the golgi apparatus membrane. The protein resides in the cytoplasmic vesicle. It localises to the autophagosome. The enzyme catalyses GTP + H2O = GDP + phosphate + H(+). With respect to regulation, regulated by guanine nucleotide exchange factors (GEFs) including DENND3 which promote the exchange of bound GDP for free GTP. Regulated by GTPase activating proteins (GAPs) which increase the GTP hydrolysis activity. Inhibited by GDP dissociation inhibitors (GDIs). Its function is as follows. The small GTPases Rab are key regulators of intracellular membrane trafficking, from the formation of transport vesicles to their fusion with membranes. Rabs cycle between an inactive GDP-bound form and an active GTP-bound form that is able to recruit to membranes different sets of downstream effectors directly responsible for vesicle formation, movement, tethering and fusion. RAB12 may play a role in protein transport from recycling endosomes to lysosomes regulating, for instance, the degradation of the transferrin receptor. Involved in autophagy. The protein is Ras-related protein Rab-12 of Homo sapiens (Human).